Here is a 128-residue protein sequence, read N- to C-terminus: Large ribosomal subunit protein bL19 (128 aa).

It belongs to the bacterial ribosomal protein bL19 family.

In terms of biological role, this protein is located at the 30S-50S ribosomal subunit interface and may play a role in the structure and function of the aminoacyl-tRNA binding site. This is Large ribosomal subunit protein bL19 from Paracidovorax citrulli (strain AAC00-1) (Acidovorax citrulli).